We begin with the raw amino-acid sequence, 379 residues long: Cyclin-dependent kinase-like 4 (379 aa).

The region spanning 4–286 is the Protein kinase domain; sequence YEKLAKTGEG…CSQLLESSYF (283 aa). Residues 10-18 and K33 each bind ATP; that span reads TGEGSYGVV. A [NKR]KIAxRE motif is present at residues 45 to 51; sequence KKIALRE. D126 (proton acceptor) is an active-site residue.

Belongs to the protein kinase superfamily. CMGC Ser/Thr protein kinase family. CDC2/CDKX subfamily.

It localises to the cytoplasm. The enzyme catalyses L-seryl-[protein] + ATP = O-phospho-L-seryl-[protein] + ADP + H(+). It catalyses the reaction L-threonyl-[protein] + ATP = O-phospho-L-threonyl-[protein] + ADP + H(+). The chain is Cyclin-dependent kinase-like 4 (CDKL4) from Homo sapiens (Human).